Reading from the N-terminus, the 406-residue chain is NAC transcription factor NAM-B1 (406 aa).

Residues 1–11 (MGSPDSSSGSA) are compositionally biased toward polar residues. Residues 1-40 (MGSPDSSSGSAQKPPRHQHQHQPPPPRRQGSAPELPPGFR) are disordered. Residues 35 to 204 (LPPGFRFHPT…DWVLCRIYKK (170 aa)) enclose the NAC domain. The DNA-binding element occupies 137–210 (VGVKKALVFY…IYKKTSKAAA (74 aa)).

Its subcellular location is the nucleus. Functionally, transcription factor of the NAC family associated with the grain protein content (GPC). Sequences of the 11 European varieties of H.vulgare tested belongs to the same haplotype while the sequence found in H.spontaneum, an ancestor of the cultivated H.vulgare which has a higher GPC, belongs to an other haplotype. This is NAC transcription factor NAM-B1 (NAM-B1) from Hordeum vulgare subsp. spontaneum (Wild barley).